A 185-amino-acid polypeptide reads, in one-letter code: UPF0397 protein PAM_019 (185 aa).

5 helical membrane passes run 13–33 (IGLS…PVGF), 42–62 (AFLA…VGLI), 69–89 (FILF…IGFI), 109–129 (IVYF…FFAP), and 143–163 (VYLQ…VVGI).

It belongs to the UPF0397 family.

The protein localises to the cell membrane. In Onion yellows phytoplasma (strain OY-M), this protein is UPF0397 protein PAM_019.